Reading from the N-terminus, the 155-residue chain is Aspartate carbamoyltransferase regulatory chain (155 aa).

Residues C110, C115, C139, and C142 each contribute to the Zn(2+) site.

The protein belongs to the PyrI family. Contains catalytic and regulatory chains. Zn(2+) is required as a cofactor.

Its function is as follows. Involved in allosteric regulation of aspartate carbamoyltransferase. This is Aspartate carbamoyltransferase regulatory chain from Yersinia pseudotuberculosis serotype IB (strain PB1/+).